The sequence spans 336 residues: MELALSLGDNTKKQFSFMEKNSKINNPSVSSTSTSEKDLGFCMALDVAFGGHRSLSSSSSPSVEDEKKKPAPRAKKSDEFRVSSSVDPPLQLQLHFPNWLPENSKGRQGGRMPLGAATVVEEEEEEEEAVPSMSVSPPDSVTSSFQLDFGIKSYGYERRSNKRDIDDEVERSASRASNEDNDDENGSTRKKLRLSKDQSAFLEDSFKEHSTLNPKQKIALAKQLNLRPRQVEVWFQNRRARTKLKQTEVDCEYLKRCCESLTEENRRLQKEVKELRTLKTSTPFYMQLPATTLTMCPSCERVATSAAQPSTSAAHNLCLSTSSLIPVKPRPAKQVS.

2 disordered regions span residues 53 to 141 (RSLS…PDSV) and 160 to 194 (SNKR…KLRL). A compositionally biased stretch (basic and acidic residues) spans 64–81 (EDEKKKPAPRAKKSDEFR). Over residues 120–129 (VEEEEEEEEA) the composition is skewed to acidic residues. Residues 130–141 (VPSMSVSPPDSV) show a composition bias toward low complexity. Residues 160-173 (SNKRDIDDEVERSA) show a composition bias toward basic and acidic residues. The segment at residues 187–246 (STRKKLRLSKDQSAFLEDSFKEHSTLNPKQKIALAKQLNLRPRQVEVWFQNRRARTKLKQ) is a DNA-binding region (homeobox). The interval 254–275 (LKRCCESLTEENRRLQKEVKEL) is leucine-zipper.

It belongs to the HD-ZIP homeobox family. Class II subfamily.

The protein localises to the nucleus. Probable transcription factor. This is Homeobox-leucine zipper protein HAT14 (HAT14) from Arabidopsis thaliana (Mouse-ear cress).